Reading from the N-terminus, the 543-residue chain is 2,3-bisphosphoglycerate-independent phosphoglycerate mutase (543 aa).

The Mn(2+) site is built by Asp-24 and Ser-74. Residue Ser-74 is the Phosphoserine intermediate of the active site. Substrate is bound by residues His-135, 165–166 (RD), Arg-197, Arg-203, 268–271 (RPDR), and Lys-341. 5 residues coordinate Mn(2+): Asp-408, His-412, Asp-449, His-450, and His-467.

The protein belongs to the BPG-independent phosphoglycerate mutase family. As to quaternary structure, monomer. Mn(2+) serves as cofactor.

The catalysed reaction is (2R)-2-phosphoglycerate = (2R)-3-phosphoglycerate. Its pathway is carbohydrate degradation; glycolysis; pyruvate from D-glyceraldehyde 3-phosphate: step 3/5. In terms of biological role, catalyzes the interconversion of 2-phosphoglycerate and 3-phosphoglycerate. The chain is 2,3-bisphosphoglycerate-independent phosphoglycerate mutase from Parasynechococcus marenigrum (strain WH8102).